A 114-amino-acid polypeptide reads, in one-letter code: Iron-sulfur cluster insertion protein ErpA (114 aa).

Positions 42, 106, and 108 each coordinate iron-sulfur cluster.

Belongs to the HesB/IscA family. In terms of assembly, homodimer. Iron-sulfur cluster is required as a cofactor.

Its function is as follows. Required for insertion of 4Fe-4S clusters for at least IspG. This is Iron-sulfur cluster insertion protein ErpA from Haemophilus influenzae (strain PittGG).